Reading from the N-terminus, the 211-residue chain is Ras-related protein Rab-38 (211 aa).

Residues G19, V20, G21, K22, T23, S24, S35, S36, Y38, and T41 each coordinate GTP. A Mg(2+)-binding site is contributed by T23. A Switch 1 motif is present at residues 32-46 (QNFSSHYRATIGVDF). Mg(2+) contacts are provided by T41 and D65. 5 residues coordinate GTP: G68, K128, D130, A160, and K161. Residues 68-81 (GQERFGNMTRVYYR) carry the Switch 2 motif. C205 is lipidated: S-palmitoyl cysteine. The S-geranylgeranyl cysteine moiety is linked to residue C208.

Belongs to the small GTPase superfamily. Rab family. Interacts with ANKRD27. Requires Mg(2+) as cofactor. Post-translationally, although at least one in vitro system can process and methylate the prenylated C-terminal, in an in vitro system that normally express Rab-38 and in vivo the prenylated C-terminal is not proteolytically processed and not methylated. As to expression, expressed in melanocytes.

The protein resides in the cell membrane. It is found in the melanosome. It localises to the cytoplasmic vesicle. The protein localises to the phagosome. Its subcellular location is the phagosome membrane. The protein resides in the melanosome membrane. The enzyme catalyses GTP + H2O = GDP + phosphate + H(+). With respect to regulation, regulated by guanine nucleotide exchange factors (GEFs) including the BLOC-3 complex composed of HPS1 and HPS4 which promote the exchange of bound GDP for free GTP. Regulated by GTPase activating proteins (GAPs) including SGSM2 which increase the GTP hydrolysis activity. Inhibited by GDP dissociation inhibitors (GDIs). Its function is as follows. The small GTPases Rab are key regulators of intracellular membrane trafficking, from the formation of transport vesicles to their fusion with membranes. Rabs cycle between an inactive GDP-bound form and an active GTP-bound form that is able to recruit to membranes different sets of downstream effectors directly responsible for vesicle formation, movement, tethering and fusion. RAB38 may be involved in melanosomal transport and docking. Involved in the proper sorting of TYRP1. Involved in peripheral melanosomal distribution of TYRP1 in melanocytes; the function, which probably is implicating vesicle-trafficking, includes cooperation with ANKRD27 and VAMP7. Plays a role in the maturation of phagosomes that engulf pathogens, such as S.aureus and M.tuberculosis. Plays an important role in the control of melanin production and melanosome biogenesis. In concert with RAB32, regulates the proper trafficking of melanogenic enzymes TYR, TYRP1 and DCT/TYRP2 to melanosomes in melanocytes. The protein is Ras-related protein Rab-38 of Homo sapiens (Human).